Here is a 452-residue protein sequence, read N- to C-terminus: UDP-N-acetylmuramoyl-tripeptide--D-alanyl-D-alanine ligase (452 aa).

Residue 107 to 113 (GSSGKTS) participates in ATP binding.

It belongs to the MurCDEF family. MurF subfamily. As to quaternary structure, monomer.

It localises to the cytoplasm. It carries out the reaction D-alanyl-D-alanine + UDP-N-acetyl-alpha-D-muramoyl-L-alanyl-gamma-D-glutamyl-meso-2,6-diaminopimelate + ATP = UDP-N-acetyl-alpha-D-muramoyl-L-alanyl-gamma-D-glutamyl-meso-2,6-diaminopimeloyl-D-alanyl-D-alanine + ADP + phosphate + H(+). Its pathway is cell wall biogenesis; peptidoglycan biosynthesis. Functionally, involved in cell wall formation. Catalyzes the final step in the synthesis of UDP-N-acetylmuramoyl-pentapeptide, the precursor of murein. The protein is UDP-N-acetylmuramoyl-tripeptide--D-alanyl-D-alanine ligase of Escherichia coli (strain K12).